A 330-amino-acid chain; its full sequence is GTPase Obg (330 aa).

Residues 1-159 enclose the Obg domain; sequence MNFIDEVKIY…MWIHLSLKLL (159 aa). An OBG-type G domain is found at 160 to 327; the sequence is SDVGLVGLPN…IVKLALKIIK (168 aa). GTP-binding positions include 166–173, 191–195, 212–215, 279–282, and 308–310; these read GLPNAGKS, FTTLV, DIPG, NKCD, and STY. Mg(2+) contacts are provided by S173 and T193.

This sequence belongs to the TRAFAC class OBG-HflX-like GTPase superfamily. OBG GTPase family. In terms of assembly, monomer. Mg(2+) serves as cofactor.

The protein resides in the cytoplasm. In terms of biological role, an essential GTPase which binds GTP, GDP and possibly (p)ppGpp with moderate affinity, with high nucleotide exchange rates and a fairly low GTP hydrolysis rate. Plays a role in control of the cell cycle, stress response, ribosome biogenesis and in those bacteria that undergo differentiation, in morphogenesis control. This chain is GTPase Obg, found in Rickettsia akari (strain Hartford).